Here is a 221-residue protein sequence, read N- to C-terminus: ATP phosphoribosyltransferase (221 aa).

This sequence belongs to the ATP phosphoribosyltransferase family. Short subfamily. As to quaternary structure, heteromultimer composed of HisG and HisZ subunits.

It localises to the cytoplasm. It carries out the reaction 1-(5-phospho-beta-D-ribosyl)-ATP + diphosphate = 5-phospho-alpha-D-ribose 1-diphosphate + ATP. Its pathway is amino-acid biosynthesis; L-histidine biosynthesis; L-histidine from 5-phospho-alpha-D-ribose 1-diphosphate: step 1/9. Functionally, catalyzes the condensation of ATP and 5-phosphoribose 1-diphosphate to form N'-(5'-phosphoribosyl)-ATP (PR-ATP). Has a crucial role in the pathway because the rate of histidine biosynthesis seems to be controlled primarily by regulation of HisG enzymatic activity. The sequence is that of ATP phosphoribosyltransferase from Carboxydothermus hydrogenoformans (strain ATCC BAA-161 / DSM 6008 / Z-2901).